The primary structure comprises 341 residues: Cysteine-rich with EGF-like domain protein 2 (341 aa).

A signal peptide spans M1 to T24. Positions D136–L178 constitute an EGF-like domain. 3 disulfide bridges follow: C140–C154, C148–C166, and C168–C177. A glycan (N-linked (GlcNAc...) asparagine) is linked at N190. FU repeat units lie at residues F193 to C248 and S254 to C308. The 27-residue stretch at D291–C317 folds into the EGF-like 2; calcium-binding; truncated domain.

It belongs to the CRELD family.

Its subcellular location is the secreted. The protein resides in the endoplasmic reticulum. Possible role in neuronal acetylcholine receptor transport. The sequence is that of Cysteine-rich with EGF-like domain protein 2 (creld2) from Danio rerio (Zebrafish).